The chain runs to 931 residues: Netrin receptor UNC5C (931 aa).

The N-terminal stretch at 1–40 (MRKGLRATAARCGLGLGYLLQMLVLPALALLSASGTGSAA) is a signal peptide. Topologically, residues 41–380 (QDDDFFHELP…APDSDDVALY (340 aa)) are extracellular. The 98-residue stretch at 62–159 (PHFLIEPEEA…AGTTKSRKAY (98 aa)) folds into the Ig-like domain. Cystine bridges form between C83–C144, C95–C142, C188–C239, C272–C309, C276–C313, C287–C299, C328–C362, C332–C367, and C340–C352. One can recognise an Ig-like C2-type domain in the interval 161–256 (RIAYLRKTFE…KRKSTTATVI (96 aa)). N-linked (GlcNAc...) asparagine glycosylation is present at N236. 2 consecutive TSP type-1 domains span residues 260–314 (NGGW…TLCP) and 316–368 (DGRW…GLCM). N361 carries an N-linked (GlcNAc...) asparagine glycan. Residues 381-401 (VGIVIAVIVCLAISVVVALFV) form a helical membrane-spanning segment. Topologically, residues 402-931 (YRKNHRDFES…VVSLAAEGQY (530 aa)) are cytoplasmic. A required for netrin-mediated axon repulsion of neuronal growth cones region spans residues 402-931 (YRKNHRDFES…VVSLAAEGQY (530 aa)). Residue S502 is modified to Phosphoserine. In terms of domain architecture, ZU5 spans 530–673 (CTAFGSFNSL…LSTYALVGHS (144 aa)). Y568 is modified (phosphotyrosine). Positions 694-712 (SLEYSIRVYCLDDTQDALK) are interaction with DCC. Positions 850–929 (QKLCSSLDAP…ETVVSLAAEG (80 aa)) constitute a Death domain.

This sequence belongs to the unc-5 family. In terms of assembly, interacts with DCC (via cytoplasmic domain). Interacts (tyrosine phosphorylated form) with PTPN11. Interacts (via extracellular domain) with FLRT3 (via extracellular domain). Interacts (via Ig-like C2-type domain) with DSCAM (via extracellular domain). Interacts (via death domain) with DAPK1. Interacts (via cytoplasmic domain) with TUBB3; this interaction is decreased by NTN1/Netrin-1. Post-translationally, proteolytically cleaved by caspases during apoptosis. The cleavage does not take place when the receptor is associated with netrin ligand. Its cleavage by caspases is required to induce apoptosis. In terms of processing, phosphorylated on different cytoplasmic tyrosine residues. Phosphorylation of Tyr-568 leads to an interaction with PTPN11 phosphatase, suggesting that its activity is regulated by phosphorylation/dephosphorylation. Tyrosine phosphorylation is netrin-dependent. In terms of tissue distribution, mainly expressed in brain. Expressed in temporal lobe cortical neurons and in neurons of the hippocampal pyramidal layer. Also expressed in kidney. Not expressed in developing or adult lung.

Its subcellular location is the cell membrane. It is found in the cell surface. The protein localises to the synapse. It localises to the synaptosome. The protein resides in the cell projection. Its subcellular location is the axon. It is found in the dendrite. The protein localises to the growth cone. It localises to the lamellipodium. The protein resides in the filopodium. In terms of biological role, receptor for netrin required for axon guidance. Mediates axon repulsion of neuronal growth cones in the developing nervous system upon ligand binding. NTN1/Netrin-1 binding might cause dissociation of UNC5C from polymerized TUBB3 in microtubules and thereby lead to increased microtubule dynamics and axon repulsion. Axon repulsion in growth cones may also be caused by its association with DCC that may trigger signaling for repulsion. Might also collaborate with DSCAM in NTN1-mediated axon repulsion independently of DCC. Also involved in corticospinal tract axon guidance independently of DCC. Involved in dorsal root ganglion axon projection towards the spinal cord. It also acts as a dependence receptor required for apoptosis induction when not associated with netrin ligand. This Homo sapiens (Human) protein is Netrin receptor UNC5C (UNC5C).